Here is a 375-residue protein sequence, read N- to C-terminus: Xylose transport system permease protein XylH (375 aa).

A run of 10 helical transmembrane segments spans residues 9 to 29, 52 to 72, 85 to 105, 118 to 138, 159 to 179, 199 to 219, 220 to 240, 271 to 291, 319 to 339, and 348 to 368; these read LQVYIMLIAIAVIMAFFSVAT, LAIGMVFVIISAEIDLSVGSL, VWWGFPLPVTIIATIALGLIF, VPSFIVTLAGYLAFRGILIGL, LSDIAGVILGGIAVIGFVLWG, DFTKYALFAVIVLGAIYLLND, YRGIPFPVLVLAVLAILGLFL, KLIIFAMNGVLVAIAGLILSA, LAGGVGSVFGVVIGALIIASL, and VPTFWQYIVKGGILLLAVWID.

This sequence belongs to the binding-protein-dependent transport system permease family. AraH/RbsC subfamily.

It is found in the cell inner membrane. Functionally, part of the binding-protein-dependent transport system for D-xylose. Probably responsible for the translocation of the substrate across the membrane. The sequence is that of Xylose transport system permease protein XylH (xylH) from Haemophilus influenzae (strain ATCC 51907 / DSM 11121 / KW20 / Rd).